The chain runs to 916 residues: Translation initiation factor IF-2 (916 aa).

A compositionally biased stretch (basic and acidic residues) spans 151-191 (NLDEQQRLAESDRARDEAIQRKRDEEQAAKDRVEAERKAAE). Disordered regions lie at residues 151 to 262 (NLDE…SHVM) and 280 to 328 (HLSA…ERPT). Low complexity-rich tracts occupy residues 192–243 (EAAA…ATPA) and 293–305 (RGKP…SSSS). The region spanning 415–584 (SRPPVVTIMG…SLQAEVLELK (170 aa)) is the tr-type G domain. The tract at residues 424–431 (GHVDHGKT) is G1. 424 to 431 (GHVDHGKT) contributes to the GTP binding site. Residues 449–453 (GITQH) are G2. The interval 470 to 473 (DTPG) is G3. Residues 470 to 474 (DTPGH) and 524 to 527 (NKID) each bind GTP. Positions 524 to 527 (NKID) are G4. The segment at 560–562 (SAK) is G5.

This sequence belongs to the TRAFAC class translation factor GTPase superfamily. Classic translation factor GTPase family. IF-2 subfamily.

It localises to the cytoplasm. In terms of biological role, one of the essential components for the initiation of protein synthesis. Protects formylmethionyl-tRNA from spontaneous hydrolysis and promotes its binding to the 30S ribosomal subunits. Also involved in the hydrolysis of GTP during the formation of the 70S ribosomal complex. This chain is Translation initiation factor IF-2, found in Xanthomonas campestris pv. campestris (strain B100).